Here is a 136-residue protein sequence, read N- to C-terminus: uncharacterized protein (136 aa).

It localises to the mitochondrion. This is an uncharacterized protein from Arabidopsis thaliana (Mouse-ear cress).